The primary structure comprises 287 residues: Phosphatidylserine decarboxylase proenzyme (287 aa).

Residues Asp90, His147, and Ser252 each act as charge relay system; for autoendoproteolytic cleavage activity in the active site. Catalysis depends on Ser252, which acts as the Schiff-base intermediate with substrate; via pyruvic acid; for decarboxylase activity. Residue Ser252 is modified to Pyruvic acid (Ser); by autocatalysis.

The protein belongs to the phosphatidylserine decarboxylase family. PSD-B subfamily. Prokaryotic type I sub-subfamily. In terms of assembly, heterodimer of a large membrane-associated beta subunit and a small pyruvoyl-containing alpha subunit. Requires pyruvate as cofactor. Is synthesized initially as an inactive proenzyme. Formation of the active enzyme involves a self-maturation process in which the active site pyruvoyl group is generated from an internal serine residue via an autocatalytic post-translational modification. Two non-identical subunits are generated from the proenzyme in this reaction, and the pyruvate is formed at the N-terminus of the alpha chain, which is derived from the carboxyl end of the proenzyme. The autoendoproteolytic cleavage occurs by a canonical serine protease mechanism, in which the side chain hydroxyl group of the serine supplies its oxygen atom to form the C-terminus of the beta chain, while the remainder of the serine residue undergoes an oxidative deamination to produce ammonia and the pyruvoyl prosthetic group on the alpha chain. During this reaction, the Ser that is part of the protease active site of the proenzyme becomes the pyruvoyl prosthetic group, which constitutes an essential element of the active site of the mature decarboxylase.

The protein localises to the cell membrane. The enzyme catalyses a 1,2-diacyl-sn-glycero-3-phospho-L-serine + H(+) = a 1,2-diacyl-sn-glycero-3-phosphoethanolamine + CO2. The protein operates within phospholipid metabolism; phosphatidylethanolamine biosynthesis; phosphatidylethanolamine from CDP-diacylglycerol: step 2/2. In terms of biological role, catalyzes the formation of phosphatidylethanolamine (PtdEtn) from phosphatidylserine (PtdSer). This chain is Phosphatidylserine decarboxylase proenzyme, found in Pseudomonas putida (strain ATCC 47054 / DSM 6125 / CFBP 8728 / NCIMB 11950 / KT2440).